Reading from the N-terminus, the 97-residue chain is Small ribosomal subunit protein uS19 (97 aa).

Belongs to the universal ribosomal protein uS19 family.

In terms of biological role, protein S19 forms a complex with S13 that binds strongly to the 16S ribosomal RNA. This chain is Small ribosomal subunit protein uS19, found in Salinibacter ruber (strain DSM 13855 / M31).